The primary structure comprises 439 residues: NAD kinase (439 aa).

S46, S48, S50, S55, and S64 each carry phosphoserine.

Belongs to the NAD kinase family. Requires a divalent metal cation as cofactor.

The enzyme catalyses NAD(+) + ATP = ADP + NADP(+) + H(+). The protein is NAD kinase (Nadk) of Mus musculus (Mouse).